We begin with the raw amino-acid sequence, 609 residues long: Pescadillo homolog (609 aa).

Residues 320 to 413 (KLKNLFKGLK…KLLPTNKYFI (94 aa)) enclose the BRCT domain. 2 disordered regions span residues 443 to 462 (DEFEKQERAEGISDDEDEDF) and 488 to 609 (ALNS…EILA). Composition is skewed to basic and acidic residues over residues 444-453 (EFEKQERAEG) and 488-498 (ALNSGEAKKEQ). Residues 481-509 (FREEKAEALNSGEAKKEQAEEDNEDDDQE) are a coiled coil. The span at 499-512 (AEEDNEDDDQEPDQ) shows a compositional bias: acidic residues. Composition is skewed to basic and acidic residues over residues 513–524 (DETKKQRSEKKQ) and 533–552 (VFKENPKEQKQLTKQEEALR). A coiled-coil region spans residues 539–607 (KEQKQLTKQE…QKRKAQRKEI (69 aa)). Residues 554–564 (KMVKSRHKKLY) are compositionally biased toward basic residues. The span at 567–609 (LLDKQKKATKEANLLREKRQQIDKQKRKEQTQKRKAQRKEILA) shows a compositional bias: basic and acidic residues.

The protein belongs to the pescadillo family.

Its subcellular location is the nucleus. It is found in the nucleolus. The protein localises to the nucleoplasm. Functionally, required for maturation of ribosomal RNAs and formation of the large ribosomal subunit. This chain is Pescadillo homolog, found in Aedes aegypti (Yellowfever mosquito).